Consider the following 432-residue polypeptide: MNLLQSCKDMAMMMRIDSVSHITNTALLPCLYNGTVLRRRSLSLRKCGFRERKFQLRCVSASSDSLQFDFSPPPIDHDFLDTISVSGGKVSEDGVVESFDNDDEALDAFDNGVVVVDLSHFGRIRVSGDDRAHFLHNQTTANFESLYEGQGCDTVFVTPTARTIDIAHAWIMKNAILLTVSPTTCQSIIEMLNKYIFFADKVEIKDITKQTCLFALAGPKSNQIMSKLNLGDLIGQPYGRHQHYSFDGMPITVGVGSLISDEGFTMLMSPGGAVSVWKTLLAEGAIPMGSVAWEKLRITQGRPAPERELSKEFNVLEAGLWNSISLNKGCYKGQETIARLMTYDGIKQRLCGLNLSAPSEPGSTITVDGKKVGKLTSYTGGKNGSGHFGLGYIKKQAASIGNTVTVGEDISGIVSEVPYLARQHPPSANSSS.

A chloroplast-targeting transit peptide spans M1–R57.

It belongs to the GcvT family. In terms of tissue distribution, expressed in young leaves (at protein level).

It localises to the plastid. It is found in the chloroplast. Its function is as follows. Folate-dependent protein involved in Fe/S cluster biogenesis. Functionally complements an E.coli mutant defective in ygfZ. The sequence is that of Putative transferase At1g60990, chloroplastic from Arabidopsis thaliana (Mouse-ear cress).